Consider the following 412-residue polypeptide: Transforming growth factor beta-3 proprotein (412 aa).

Residues 1-23 form the signal peptide; sequence MKMHLQRALVVLALLNLATVSLS. N-linked (GlcNAc...) asparagine glycosylation is found at Asn-74, Asn-135, and Asn-142. The Cell attachment site signature appears at 261-263; the sequence is RGD. Gln-293 carries the N5-methylglutamine modification. 4 disulfides stabilise this stretch: Cys-307-Cys-316, Cys-315-Cys-378, Cys-344-Cys-409, and Cys-348-Cys-411.

Belongs to the TGF-beta family. In terms of assembly, interacts with ASPN. Latency-associated peptide: Homodimer; disulfide-linked. Latency-associated peptide: Interacts with Transforming growth factor beta-3 (TGF-beta-3) chain; interaction is non-covalent and maintains (TGF-beta-3) in a latent state. Latency-associated peptide: Interacts with LRRC32/GARP; leading to regulate activation of TGF-beta-3 and promote epithelial fusion during palate development. Latency-associated peptide: Interacts (via cell attachment site) with integrins, leading to release of the active TGF-beta-3. Transforming growth factor beta-3: Homodimer; disulfide-linked. Transforming growth factor beta-3: Interacts with TGF-beta receptors (TGFBR1 and TGFBR2), leading to signal transduction. In terms of processing, transforming growth factor beta-3 proprotein: The precursor proprotein is cleaved in the Golgi apparatus to form Transforming growth factor beta-3 (TGF-beta-3) and Latency-associated peptide (LAP) chains, which remain non-covalently linked, rendering TGF-beta-3 inactive. Post-translationally, methylated at Gln-293 by N6AMT1. In terms of tissue distribution, expressed in cardiomyocytes.

Its subcellular location is the secreted. The protein localises to the extracellular space. It is found in the extracellular matrix. Functionally, transforming growth factor beta-3 proprotein: Precursor of the Latency-associated peptide (LAP) and Transforming growth factor beta-3 (TGF-beta-3) chains, which constitute the regulatory and active subunit of TGF-beta-3, respectively. Required to maintain the Transforming growth factor beta-3 (TGF-beta-3) chain in a latent state during storage in extracellular matrix. Associates non-covalently with TGF-beta-3 and regulates its activation via interaction with 'milieu molecules', such as LTBP1 and LRRC32/GARP, that control activation of TGF-beta-3. Interaction with integrins results in distortion of the Latency-associated peptide chain and subsequent release of the active TGF-beta-3. In terms of biological role, transforming growth factor beta-3: Multifunctional protein that regulates embryogenesis and cell differentiation and is required in various processes such as secondary palate development. Activation into mature form follows different steps: following cleavage of the proprotein in the Golgi apparatus, Latency-associated peptide (LAP) and Transforming growth factor beta-3 (TGF-beta-3) chains remain non-covalently linked rendering TGF-beta-3 inactive during storage in extracellular matrix. At the same time, LAP chain interacts with 'milieu molecules', such as LTBP1 and LRRC32/GARP that control activation of TGF-beta-3 and maintain it in a latent state during storage in extracellular milieus. TGF-beta-3 is released from LAP by integrins: integrin-binding results in distortion of the LAP chain and subsequent release of the active TGF-beta-3. Once activated following release of LAP, TGF-beta-3 acts by binding to TGF-beta receptors (TGFBR1 and TGFBR2), which transduce signal. In Rattus norvegicus (Rat), this protein is Transforming growth factor beta-3 proprotein (Tgfb3).